The sequence spans 462 residues: Acetyl-CoA decarbonylase/synthase complex subunit gamma (462 aa).

The region spanning methionine 1–proline 60 is the 4Fe-4S domain. Residues cysteine 18, cysteine 21, cysteine 26, and cysteine 43 each coordinate [4Fe-4S] cluster.

Heterodimer of delta and gamma chains. The ACDS complex is made up of alpha, epsilon, beta, gamma and delta chains with a probable stoichiometry of (alpha(2)epsilon(2))(4)-beta(8)-(gamma(1)delta(1))(8). Requires corrinoid as cofactor. [4Fe-4S] cluster serves as cofactor.

It carries out the reaction 5,6,7,8-tetrahydrosarcinapterin + methyl-Co(III)-[corrinoid Fe-S protein] = 5-methyltetrahydrosarcinapterin + Co(I)-[corrinoid Fe-S protein] + H(+). Its function is as follows. Part of a complex that catalyzes the reversible cleavage of acetyl-CoA, allowing autotrophic growth from CO(2). This is Acetyl-CoA decarbonylase/synthase complex subunit gamma from Methanopyrus kandleri (strain AV19 / DSM 6324 / JCM 9639 / NBRC 100938).